The following is a 93-amino-acid chain: Acylphosphatase (93 aa).

In terms of domain architecture, Acylphosphatase-like spans 5 to 93 (TAILRVTGFV…EERKTFDIVY (89 aa)). Catalysis depends on residues R20 and N38.

This sequence belongs to the acylphosphatase family.

The catalysed reaction is an acyl phosphate + H2O = a carboxylate + phosphate + H(+). The polypeptide is Acylphosphatase (acyP) (Listeria monocytogenes serotype 4b (strain F2365)).